Consider the following 355-residue polypeptide: Aminopeptidase N (355 aa).

Substrate contacts are provided by residues E156 and 290-294; that span reads GAMEN. Residue H326 coordinates Zn(2+). E327 (proton acceptor) is an active-site residue. Zn(2+) contacts are provided by H330 and E349. Substrate is bound at residue E349.

Belongs to the peptidase M1 family. Requires Zn(2+) as cofactor.

It is found in the cytoplasm. It catalyses the reaction Release of an N-terminal amino acid, Xaa-|-Yaa- from a peptide, amide or arylamide. Xaa is preferably Ala, but may be most amino acids including Pro (slow action). When a terminal hydrophobic residue is followed by a prolyl residue, the two may be released as an intact Xaa-Pro dipeptide.. Functionally, aminopeptidase N is involved in the degradation of intracellular peptides generated by protein breakdown during normal growth as well as in response to nutrient starvation. The polypeptide is Aminopeptidase N (pepN) (Acetobacter pasteurianus (Acetobacter turbidans)).